The primary structure comprises 210 residues: Na(+)-translocating NADH-quinone reductase subunit D (210 aa).

Helical transmembrane passes span 14-34 (PIIN…ALAV), 42-62 (LVMS…ISLI), 72-92 (IIVQ…VLQA), 96-116 (EIAK…IVMG), 131-151 (FMDG…VGFF), and 178-198 (NGLL…IWVI).

The protein belongs to the NqrDE/RnfAE family. Composed of six subunits; NqrA, NqrB, NqrC, NqrD, NqrE and NqrF.

The protein resides in the cell inner membrane. It carries out the reaction a ubiquinone + n Na(+)(in) + NADH + H(+) = a ubiquinol + n Na(+)(out) + NAD(+). Functionally, NQR complex catalyzes the reduction of ubiquinone-1 to ubiquinol by two successive reactions, coupled with the transport of Na(+) ions from the cytoplasm to the periplasm. NqrA to NqrE are probably involved in the second step, the conversion of ubisemiquinone to ubiquinol. The protein is Na(+)-translocating NADH-quinone reductase subunit D of Shewanella denitrificans (strain OS217 / ATCC BAA-1090 / DSM 15013).